The sequence spans 700 residues: uncharacterized protein (700 aa).

Transmembrane regions (helical) follow at residues 24-44 (VLCL…GLLF), 67-87 (LIIG…LLAK), 89-109 (VPLP…AELG), 115-135 (LLPA…YMPV), 139-159 (LLIY…WFWI), 383-403 (LMGT…VLLV), 420-440 (VGTV…IPEG), 461-481 (YGWA…LLWL), and 491-511 (LIDT…LWPQ).

It belongs to the YccS/YhfK family.

Its subcellular location is the cell membrane. This is an uncharacterized protein from Escherichia coli (strain K12).